Consider the following 202-residue polypeptide: Superoxide dismutase [Mn] (202 aa).

Mn(2+)-binding residues include H27, H82, D164, and H168.

This sequence belongs to the iron/manganese superoxide dismutase family. In terms of assembly, homodimer. Mn(2+) serves as cofactor.

The enzyme catalyses 2 superoxide + 2 H(+) = H2O2 + O2. Functionally, destroys superoxide anion radicals which are normally produced within the cells and which are toxic to biological systems. The polypeptide is Superoxide dismutase [Mn] (sodA) (Listeria monocytogenes serovar 1/2a (strain ATCC BAA-679 / EGD-e)).